We begin with the raw amino-acid sequence, 416 residues long: Inositol phosphate phosphatase SopB (416 aa).

Cys-315 is a catalytic residue. A CX5R motif motif is present at residues 315–321; the sequence is CKSGKDR.

Belongs to the phosphatase IpgD/SopB family.

The protein resides in the secreted. Its function is as follows. Converts phosphatidylinositol 3,4,5-trisphosphate (PtdIns 3,4,5-P3) to PtdIns 3-P and prevents the transition of PtdIns 3-P to PtdIns 3,5-P2. It is one of the known effectors injected by Salmonella into the host cell and is required for invasion and for an efficient generation and maintenance of Salmonella-containing vacuole (SVC). Alteration of the phosphoinositide composition of the plasma membrane causes membrane ruffling and actin cytoskeleton rearrangements. The persistence of PtdIns 3-P diverts the SCV from the endocytic pathway resulting in enlarged vesicles, which are essential to create a favorable environment where Salmonella can replicate and avoid immune defenses of the host cell. The sequence is that of Inositol phosphate phosphatase SopB (sopB) from Salmonella bongori.